The chain runs to 274 residues: MKKTAIALLAWFVSSASLAATPWQKITHPVPGAAQSIASFANGCIIGADTLPVQSDNYQVMRTDQRRYFGHPDLVMFIQRLSHQAQQRGLGTVLIGDMGMPAGGRFNGGHASHQTGLDVDIFLQLPKTRWSQAQLLRPQALDLVSRDGKHVVPSRWSSDIASLIKLAAQDNDVTRIFVNPAIKQQLCLDAGSDRDWLRKVRPWFQHRAHMHVRLRCPADSLECEDQPLPPPGDGCGAELQSWFEPPKPGTTKPEKKTPPPLPPSCQALLDEHVL.

The N-terminal stretch at 1–19 is a signal peptide; sequence MKKTAIALLAWFVSSASLA. Cystine bridges form between Cys44-Cys265, Cys187-Cys235, and Cys216-Cys223. 6 residues coordinate Zn(2+): His110, His113, Asp120, Asp147, His150, and His211. A disordered region spans residues 225-274; it reads DQPLPPPGDGCGAELQSWFEPPKPGTTKPEKKTPPPLPPSCQALLDEHVL.

It belongs to the peptidase M74 family. As to quaternary structure, dimer. The cofactor is Zn(2+).

Its subcellular location is the periplasm. Murein endopeptidase that cleaves the D-alanyl-meso-2,6-diamino-pimelyl amide bond that connects peptidoglycan strands. Likely plays a role in the removal of murein from the sacculus. The polypeptide is Penicillin-insensitive murein endopeptidase (Salmonella choleraesuis (strain SC-B67)).